The chain runs to 458 residues: A-type ATP synthase subunit B (458 aa).

It belongs to the ATPase alpha/beta chains family. As to quaternary structure, has multiple subunits with at least A(3), B(3), C, D, E, F, H, I and proteolipid K(x).

The protein resides in the cell membrane. In terms of biological role, component of the A-type ATP synthase that produces ATP from ADP in the presence of a proton gradient across the membrane. The B chain is a regulatory subunit. This is A-type ATP synthase subunit B from Methanocorpusculum labreanum (strain ATCC 43576 / DSM 4855 / Z).